The chain runs to 426 residues: Glutamate-1-semialdehyde 2,1-aminomutase (426 aa).

Lysine 265 carries the post-translational modification N6-(pyridoxal phosphate)lysine.

It belongs to the class-III pyridoxal-phosphate-dependent aminotransferase family. HemL subfamily. As to quaternary structure, homodimer. Pyridoxal 5'-phosphate serves as cofactor.

It localises to the cytoplasm. It catalyses the reaction (S)-4-amino-5-oxopentanoate = 5-aminolevulinate. Its pathway is porphyrin-containing compound metabolism; protoporphyrin-IX biosynthesis; 5-aminolevulinate from L-glutamyl-tRNA(Glu): step 2/2. The chain is Glutamate-1-semialdehyde 2,1-aminomutase from Escherichia coli (strain SMS-3-5 / SECEC).